A 548-amino-acid chain; its full sequence is Protein swallow (548 aa).

Disordered regions lie at residues 67-109 (AKTC…GRSS), 184-206 (NCQTHSNSDSNYNSNSNNSSSSF), and 358-428 (FSSV…ELIS). The segment covering 79-91 (QEDEDDYDEDVDG) has biased composition (acidic residues). A compositionally biased stretch (low complexity) spans 189 to 205 (SNSDSNYNSNSNNSSSS). Residues Ser-362 and Ser-368 each carry the phosphoserine modification. Over residues 388–402 (APNNSETSQPSSNDS) the composition is skewed to polar residues. Basic and acidic residues predominate over residues 406–420 (VEAHEEERPSSRRQW). 6 positions are modified to phosphoserine: Ser-463, Ser-471, Ser-475, Ser-483, Ser-485, and Ser-487.

In terms of assembly, may be a homo- or heterodimer.

It is found in the nucleus. Has a role in localizing bicoid mRNA at the anterior margin of the oocyte during oogenesis, and a poorly characterized role in nuclear divisions in early embryogenesis. This chain is Protein swallow (swa), found in Drosophila melanogaster (Fruit fly).